Here is a 163-residue protein sequence, read N- to C-terminus: 6,7-dimethyl-8-ribityllumazine synthase (163 aa).

5-amino-6-(D-ribitylamino)uracil-binding positions include F22, 56–58 (TFE), and 80–82 (AVI). A (2S)-2-hydroxy-3-oxobutyl phosphate-binding site is contributed by 85–86 (GT). The active-site Proton donor is the H88. M113 lines the 5-amino-6-(D-ribitylamino)uracil pocket. R127 lines the (2S)-2-hydroxy-3-oxobutyl phosphate pocket.

Belongs to the DMRL synthase family.

The enzyme catalyses (2S)-2-hydroxy-3-oxobutyl phosphate + 5-amino-6-(D-ribitylamino)uracil = 6,7-dimethyl-8-(1-D-ribityl)lumazine + phosphate + 2 H2O + H(+). It participates in cofactor biosynthesis; riboflavin biosynthesis; riboflavin from 2-hydroxy-3-oxobutyl phosphate and 5-amino-6-(D-ribitylamino)uracil: step 1/2. Catalyzes the formation of 6,7-dimethyl-8-ribityllumazine by condensation of 5-amino-6-(D-ribitylamino)uracil with 3,4-dihydroxy-2-butanone 4-phosphate. This is the penultimate step in the biosynthesis of riboflavin. The protein is 6,7-dimethyl-8-ribityllumazine synthase of Anaeromyxobacter sp. (strain Fw109-5).